The chain runs to 262 residues: Malonyl-[acyl-carrier protein] O-methyltransferase (262 aa).

Belongs to the methyltransferase superfamily.

It catalyses the reaction malonyl-[ACP] + S-adenosyl-L-methionine = malonyl-[ACP] methyl ester + S-adenosyl-L-homocysteine. The protein operates within cofactor biosynthesis; biotin biosynthesis. Converts the free carboxyl group of a malonyl-thioester to its methyl ester by transfer of a methyl group from S-adenosyl-L-methionine (SAM). It allows to synthesize pimeloyl-ACP via the fatty acid synthetic pathway. The protein is Malonyl-[acyl-carrier protein] O-methyltransferase of Erwinia pyrifoliae (strain DSM 12163 / CIP 106111 / Ep16/96).